The primary structure comprises 149 residues: Transcriptional repressor NrdR (149 aa).

A zinc finger lies at C3–C34. Residues P49–E139 enclose the ATP-cone domain.

The protein belongs to the NrdR family. Zn(2+) is required as a cofactor.

Negatively regulates transcription of bacterial ribonucleotide reductase nrd genes and operons by binding to NrdR-boxes. The protein is Transcriptional repressor NrdR of Shewanella pealeana (strain ATCC 700345 / ANG-SQ1).